The primary structure comprises 250 residues: 3-deoxy-manno-octulosonate cytidylyltransferase (250 aa).

It belongs to the KdsB family.

The protein resides in the cytoplasm. The catalysed reaction is 3-deoxy-alpha-D-manno-oct-2-ulosonate + CTP = CMP-3-deoxy-beta-D-manno-octulosonate + diphosphate. It functions in the pathway nucleotide-sugar biosynthesis; CMP-3-deoxy-D-manno-octulosonate biosynthesis; CMP-3-deoxy-D-manno-octulosonate from 3-deoxy-D-manno-octulosonate and CTP: step 1/1. The protein operates within bacterial outer membrane biogenesis; lipopolysaccharide biosynthesis. Activates KDO (a required 8-carbon sugar) for incorporation into bacterial lipopolysaccharide in Gram-negative bacteria. This chain is 3-deoxy-manno-octulosonate cytidylyltransferase, found in Sinorhizobium medicae (strain WSM419) (Ensifer medicae).